Here is a 99-residue protein sequence, read N- to C-terminus: MQVLVRDNNVDQALKALKKKMQREGIFREMKLRGHYEKPSEKKAREKAEAVRRARKLARKKLQREGLLPMKPKPVFGAGPGGDRRGPGAGPGAGPRPAR.

The segment at 60 to 99 (KKLQREGLLPMKPKPVFGAGPGGDRRGPGAGPGAGPRPAR) is disordered.

Belongs to the bacterial ribosomal protein bS21 family.

In Rhodopseudomonas palustris (strain BisA53), this protein is Small ribosomal subunit protein bS21.